Reading from the N-terminus, the 99-residue chain is Nucleoid-associated protein EbfC (99 aa).

Belongs to the YbaB/EbfC family. In terms of assembly, homodimer.

Its subcellular location is the cytoplasm. It is found in the nucleoid. Its function is as follows. Binds to DNA and alters its conformation. May be involved in regulation of gene expression, nucleoid organization and DNA protection. In Borrelia hermsii (strain HS1 / DAH), this protein is Nucleoid-associated protein EbfC.